Reading from the N-terminus, the 327-residue chain is tRNA dimethylallyltransferase (327 aa).

ATP is bound at residue 18–25; it reads GPTASGKT. 20-25 contacts substrate; it reads TASGKT. Interaction with substrate tRNA regions lie at residues 43–46, 167–171, and 251–256; these read DSAL, QRVQR, and RCVGYR.

This sequence belongs to the IPP transferase family. As to quaternary structure, monomer. Requires Mg(2+) as cofactor.

It carries out the reaction adenosine(37) in tRNA + dimethylallyl diphosphate = N(6)-dimethylallyladenosine(37) in tRNA + diphosphate. Functionally, catalyzes the transfer of a dimethylallyl group onto the adenine at position 37 in tRNAs that read codons beginning with uridine, leading to the formation of N6-(dimethylallyl)adenosine (i(6)A). In Methylibium petroleiphilum (strain ATCC BAA-1232 / LMG 22953 / PM1), this protein is tRNA dimethylallyltransferase.